The chain runs to 435 residues: MKKHLLAGACALAMGFAVIPGTFADETCNSPFTTALITGQEQYLHVWTLGMPGVGDESDKLVTISVDPKSDKYGKVINTLSVGGRGEAHHTGFTDDRRYLWAGRLDDNKIFIFDLIDPANPKLIKTITDFADRTGYVGPHTFYALPGRMLIQALSNTKTHDGQTGLAVYSNAGELVSLHPMPVTDGGDGYGYDIGINPAKNVLLTSSFTGWNNYMMDLGKMVKDPEAMKRFGNTMAIWDLKSMKAEKILNVPGAPLEIRWSLKPEHNWAYTATALTSKLWLIKQDDKGEWIAKETGTIGDPSKIPLPVDISITADAKGLWVNTFLDGTTRFYDISEPEHPKEVFSKKMGNQVNMVSQSYDGKRVYFTTSLIANWDKKGAENDQWLKAYDWDGKELVEKFTVDFNELKLGRAHHMKFSSKTNAAELGTNQSFPTRQ.

A signal peptide spans 1–24 (MKKHLLAGACALAMGFAVIPGTFA).

Belongs to the selenium-binding protein family. As to quaternary structure, homotetramer. Requires Cu cation as cofactor.

It is found in the periplasm. The enzyme catalyses methanethiol + O2 + H2O = hydrogen sulfide + formaldehyde + H2O2 + H(+). Its pathway is organosulfur degradation. Its activity is regulated as follows. Inhibited by EDTA but not by EGTA. Catalyzes the oxidation of methanethiol. Can also degrade ethanethiol, but not methanol, methylamine or dimethylsulfide. This is Methanethiol oxidase from Hyphomicrobium sp.